The sequence spans 49 residues: Large ribosomal subunit protein bL33B (49 aa).

The protein belongs to the bacterial ribosomal protein bL33 family.

The sequence is that of Large ribosomal subunit protein bL33B from Latilactobacillus sakei subsp. sakei (strain 23K) (Lactobacillus sakei subsp. sakei).